Here is a 505-residue protein sequence, read N- to C-terminus: MEEFQGHIELDRSWQHNFFYPLIFQEYIYAFAYDHGLNKSILLENSGDKKYSLLIVKRLITRMSQQNHLILSANDSNQNEIFGHKNKKKLYSEMITEGFAVIVEIPFSLLLISSLEGKEIVKSHNLRSIHSIFPFLEDKFLHLNYVLDILIPYPAHLEILVQTLRYWLKDASSLHFLRFFLYEYRNWNSLITQKEFISFLKKRNQRLFLFLYNFHVCEYESLFVFLRNQSSYLRSTSFGALLERIHFYGKIKYLVKVFTNDLGVIQWFFKEPFPHYVRYQGKSILASKGTFFLMHKWKYYIIYFWQCNFSVWSQPRKIYINRLSNHSLDFMGFFSSVRLNSSVIRSQLLENSFLIENIIKKFDTIVPIIPLVGSLAKAKFCNVLGHPVSKSVWADLSDSDIIDRFGRICRNLSHYYSGSSRKKSLYRIKYILRLSCARTLSRKHKSTVRSFLKRLGSEFLEEFFTEEEKVLSLILPRDSSTSWGLYKRRIWYLDIICIHKLVNDE.

It belongs to the intron maturase 2 family. MatK subfamily.

Its subcellular location is the plastid. The protein localises to the chloroplast. Usually encoded in the trnK tRNA gene intron. Probably assists in splicing its own and other chloroplast group II introns. This chain is Maturase K, found in Beta vulgaris (Sugar beet).